We begin with the raw amino-acid sequence, 184 residues long: MNEFSILCRVLGSLYYRQPQDPLLVPLFTLIREGKLAANWPLEQDELLTRLQKSCDMTQVSADYNALFIGDECAVPPYRSAWVEGATEAEVRAFLSERGMPLADTPADHIGTLLLAASWLEDQSTEDESEALETLFSEYLLPWCGAFLGKVEAHATTPFWRTMAPLTRDAISAMWDELEEDSEE.

Belongs to the TorD/DmsD family. As to quaternary structure, interacts with YcdX.

Functionally, acts as a chaperone that increases YcdX activity, maybe by facilitating the correct insertion of the zinc ions into the catalytic site of YcdX. Involved in the swarming motility process. The chain is Chaperone protein YcdY (ycdY) from Escherichia coli (strain K12).